The sequence spans 250 residues: Triosephosphate isomerase (250 aa).

Position 9 to 11 (9 to 11 (NWK)) interacts with substrate. His-100 functions as the Electrophile in the catalytic mechanism. Residue Glu-169 is the Proton acceptor of the active site. Residues Gly-175, Ser-208, and 229–230 (GG) each bind substrate.

This sequence belongs to the triosephosphate isomerase family. Homodimer.

It is found in the cytoplasm. The catalysed reaction is D-glyceraldehyde 3-phosphate = dihydroxyacetone phosphate. The protein operates within carbohydrate biosynthesis; gluconeogenesis. It functions in the pathway carbohydrate degradation; glycolysis; D-glyceraldehyde 3-phosphate from glycerone phosphate: step 1/1. Its function is as follows. Involved in the gluconeogenesis. Catalyzes stereospecifically the conversion of dihydroxyacetone phosphate (DHAP) to D-glyceraldehyde-3-phosphate (G3P). The chain is Triosephosphate isomerase from Synechococcus sp. (strain JA-2-3B'a(2-13)) (Cyanobacteria bacterium Yellowstone B-Prime).